Reading from the N-terminus, the 277-residue chain is Large ribosomal subunit protein mL46 (277 aa).

Lys-228 is modified (N6-acetyllysine).

Belongs to the mitochondrion-specific ribosomal protein mL46 family. In terms of assembly, component of the mitochondrial ribosome large subunit (39S) which comprises a 16S rRNA and about 50 distinct proteins.

It localises to the mitochondrion. The sequence is that of Large ribosomal subunit protein mL46 (MRPL46) from Bos taurus (Bovine).